Consider the following 140-residue polypeptide: Large ribosomal subunit protein uL14 (140 aa).

Belongs to the universal ribosomal protein uL14 family. Part of the 50S ribosomal subunit. Forms a cluster with proteins L3 and L24e, part of which may contact the 16S rRNA in 2 intersubunit bridges.

Its function is as follows. Binds to 23S rRNA. Forms part of two intersubunit bridges in the 70S ribosome. In Aeropyrum pernix (strain ATCC 700893 / DSM 11879 / JCM 9820 / NBRC 100138 / K1), this protein is Large ribosomal subunit protein uL14.